The following is a 418-amino-acid chain: cAMP-dependent protein kinase type II-beta regulatory subunit (418 aa).

Residues 2 to 153 (SIEIPAGLTE…RLQEACKDIL (152 aa)) form a dimerization and phosphorylation region. Residues 48-57 (TARFGHEGRT) are compositionally biased toward basic and acidic residues. The segment at 48–96 (TARFGHEGRTWGDLGAAAGGGTPSKGVNFAEEPMQSDSEDGEEEEAAPA) is disordered. T69 carries the phosphothreonine modification. S83, S85, and S114 each carry phosphoserine. Positions 84–94 (DSEDGEEEEAA) are enriched in acidic residues. Residues 154–275 (LFKN…ESLP), E223, R232, 276–418 (FLKS…EPTA), E352, and R361 each bind 3',5'-cyclic AMP.

This sequence belongs to the cAMP-dependent kinase regulatory chain family. In terms of assembly, the inactive form of the enzyme is composed of two regulatory chains and two catalytic chains. Activation by cAMP produces two active catalytic monomers and a regulatory dimer that binds four cAMP molecules. Interacts with PRKACA and PRKACB. Interacts with the phosphorylated form of PJA2. Forms a complex composed of PRKAR2B, GSK3B and GSKIP through GSKIP interaction; facilitates PKA-induced phosphorylation and regulates GSK3B activity. In terms of processing, phosphorylated by the activated catalytic chain. In terms of tissue distribution, four types of regulatory chains are found: I-alpha, I-beta, II-alpha, and II-beta. Their expression varies among tissues and is in some cases constitutive and in others inducible.

The protein resides in the cytoplasm. It is found in the cell membrane. Regulatory subunit of the cAMP-dependent protein kinases involved in cAMP signaling in cells. Type II regulatory chains mediate membrane association by binding to anchoring proteins, including the MAP2 kinase. In Homo sapiens (Human), this protein is cAMP-dependent protein kinase type II-beta regulatory subunit (PRKAR2B).